The sequence spans 204 residues: Leucyl/phenylalanyl-tRNA--protein transferase (204 aa).

This sequence belongs to the L/F-transferase family.

The protein localises to the cytoplasm. It catalyses the reaction N-terminal L-lysyl-[protein] + L-leucyl-tRNA(Leu) = N-terminal L-leucyl-L-lysyl-[protein] + tRNA(Leu) + H(+). The catalysed reaction is N-terminal L-arginyl-[protein] + L-leucyl-tRNA(Leu) = N-terminal L-leucyl-L-arginyl-[protein] + tRNA(Leu) + H(+). The enzyme catalyses L-phenylalanyl-tRNA(Phe) + an N-terminal L-alpha-aminoacyl-[protein] = an N-terminal L-phenylalanyl-L-alpha-aminoacyl-[protein] + tRNA(Phe). In terms of biological role, functions in the N-end rule pathway of protein degradation where it conjugates Leu, Phe and, less efficiently, Met from aminoacyl-tRNAs to the N-termini of proteins containing an N-terminal arginine or lysine. The polypeptide is Leucyl/phenylalanyl-tRNA--protein transferase (Rhizobium leguminosarum bv. trifolii (strain WSM2304)).